The primary structure comprises 335 residues: Ferrochelatase (335 aa).

Positions 207 and 288 each coordinate Fe cation.

The protein belongs to the ferrochelatase family.

The protein resides in the cytoplasm. The enzyme catalyses heme b + 2 H(+) = protoporphyrin IX + Fe(2+). It participates in porphyrin-containing compound metabolism; protoheme biosynthesis; protoheme from protoporphyrin-IX: step 1/1. Catalyzes the ferrous insertion into protoporphyrin IX. The protein is Ferrochelatase of Helicobacter pylori (strain J99 / ATCC 700824) (Campylobacter pylori J99).